The following is a 256-amino-acid chain: uncharacterized protein (256 aa).

Positions 1-23 are cleaved as a signal peptide; sequence MKRLNKLVLGIIFLFLVISITAG. Cysteine 24 carries N-palmitoyl cysteine lipidation. Residue cysteine 24 is the site of S-diacylglycerol cysteine attachment.

The protein belongs to the staphylococcal tandem lipoprotein family.

The protein localises to the cell membrane. This is an uncharacterized protein from Staphylococcus aureus (strain COL).